We begin with the raw amino-acid sequence, 65 residues long: Large ribosomal subunit protein bL35 (65 aa).

Belongs to the bacterial ribosomal protein bL35 family.

This is Large ribosomal subunit protein bL35 from Syntrophobacter fumaroxidans (strain DSM 10017 / MPOB).